The following is an 80-amino-acid chain: Acyl carrier protein (80 aa).

Residues 2–77 form the Carrier domain; it reads SDIEQRVKKI…QAIDYAKAHV (76 aa). S37 carries the O-(pantetheine 4'-phosphoryl)serine modification.

This sequence belongs to the acyl carrier protein (ACP) family. Post-translationally, 4'-phosphopantetheine is transferred from CoA to a specific serine of apo-ACP by AcpS. This modification is essential for activity because fatty acids are bound in thioester linkage to the sulfhydryl of the prosthetic group.

The protein resides in the cytoplasm. The protein operates within lipid metabolism; fatty acid biosynthesis. In terms of biological role, carrier of the growing fatty acid chain in fatty acid biosynthesis. The chain is Acyl carrier protein from Herminiimonas arsenicoxydans.